We begin with the raw amino-acid sequence, 220 residues long: MFNNITDDDRGQVGIGTLIVFIAMVLVAAIAAGVLVNTAGFLQATAEDAGEQSVNKVTNRVEVLNTHGTVGGEEDIDNITLTVRLAAGSDAVDMNETSIKYLSGDSVVTLTNQTVTSGANSATNDSAEGVADSDEFGLSEVTDDDGSFGVLNSMNDRYEVTIDTAAIETSDGDNTNLIGGLSTGEQVTLEITSRTGGTTQVILTMPQQLAGKTQNEPVEL.

Positions 1–11 are excised as a propeptide; sequence MFNNITDDDRG. Residues asparagine 78, asparagine 95, asparagine 112, and asparagine 124 are each glycosylated (N-linked (GlcNAc...) asparagine).

Belongs to the archaeal flagellin family. Post-translationally, glycosylated by a pentasaccharide similar to the S-layer glycoprotein, probably comprising a hexose, 2 hexuronic acids, a methyl ester of a hexuronic acid and mannose.

The protein resides in the archaeal flagellum. In terms of biological role, flagellin that plays both structural and regulatory roles in flagella biosynthesis. Does not constitute a major flagellin in terms of abundance contrary to FlgA1: may regulate the flagella-dependent swimming motility depending on the relative abundance of FlgA1. Not involved in PibD-dependent surface adhesion. The sequence is that of Flagellin A2 (flgA2) from Haloferax volcanii (strain ATCC 29605 / DSM 3757 / JCM 8879 / NBRC 14742 / NCIMB 2012 / VKM B-1768 / DS2) (Halobacterium volcanii).